The primary structure comprises 333 residues: UDP-N-acetylenolpyruvoylglucosamine reductase (333 aa).

An FAD-binding PCMH-type domain is found at 12-176 (LPAQCRALIE…TSVVFRLPKD (165 aa)). Arg153 is a catalytic residue. Residue Ser221 is the Proton donor of the active site. Glu317 is a catalytic residue.

The protein belongs to the MurB family. FAD is required as a cofactor.

The protein localises to the cytoplasm. The enzyme catalyses UDP-N-acetyl-alpha-D-muramate + NADP(+) = UDP-N-acetyl-3-O-(1-carboxyvinyl)-alpha-D-glucosamine + NADPH + H(+). It functions in the pathway cell wall biogenesis; peptidoglycan biosynthesis. Its function is as follows. Cell wall formation. The protein is UDP-N-acetylenolpyruvoylglucosamine reductase of Idiomarina loihiensis (strain ATCC BAA-735 / DSM 15497 / L2-TR).